A 120-amino-acid chain; its full sequence is uncharacterized protein (120 aa).

The HIT domain occupies 7-120 (VFAKIITKNL…KLIGLINNND (114 aa)). Positions 101-105 (HFHFH) match the Histidine triad motif motif.

This is an uncharacterized protein from Rickettsia prowazekii (strain Madrid E).